The following is a 359-amino-acid chain: Innexin inx2 (359 aa).

The Cytoplasmic segment spans residues 1–22 (MFDVFGSVKGLLKLDSVCIDNN). A helical membrane pass occupies residues 23 to 43 (LFRLHYKATVIILIAFSLLVT). Topologically, residues 44–109 (SRQYIGDPID…KDEVKYHKYY (66 aa)) are extracellular. A helical transmembrane segment spans residues 110–130 (QWVCFVLFFQAILFYIPRYLW). Over 131 to 180 (KTWEGGRIKMLVLDLNSPVVNEQSKADRKKLLVDYFATNLHTQNFYAYRF) the chain is Cytoplasmic. Residues 181–201 (FICEALNFVNVVGQIYFMDLF) traverse the membrane as a helical segment. Topologically, residues 202 to 266 (LDGEFTTYGS…VLPLNIVNEK (65 aa)) are extracellular. Residues 267-287 (IYVFLWFWFVILSVLTGIGLV) form a helical membrane-spanning segment. Residues 288–359 (YRLATAMGPQ…AKKLEGKEIV (72 aa)) lie on the Cytoplasmic side of the membrane.

Belongs to the pannexin family. Widespread expression in embryo, in anterior and posterior row of neural precursors, midline precursors and in epithelial sheet of stomodeum.

The protein resides in the cell membrane. The protein localises to the cell junction. It localises to the gap junction. Its function is as follows. Structural components of the gap junctions. This chain is Innexin inx2 (inx2), found in Schistocerca americana (American grasshopper).